A 32-amino-acid polypeptide reads, in one-letter code: Peptide II.10.10 (32 aa).

3 disulfide bridges follow: Cys5/Cys24, Cys10/Cys29, and Cys14/Cys31.

This sequence belongs to the short scorpion toxin superfamily. Potassium channel inhibitor family. Alpha-KTx 10 subfamily. Expressed by the venom gland.

It localises to the secreted. In Centruroides tecomanus (Scorpion), this protein is Peptide II.10.10.